Here is an 85-residue protein sequence, read N- to C-terminus: Large ribosomal subunit protein bL27 (85 aa).

Residues 1–23 (MAHKKGQGSTQNNRDSAGRRLGV) are disordered.

This sequence belongs to the bacterial ribosomal protein bL27 family.

This Helicobacter hepaticus (strain ATCC 51449 / 3B1) protein is Large ribosomal subunit protein bL27.